The following is a 117-amino-acid chain: Ribosome-binding factor A (117 aa).

The protein belongs to the RbfA family. Monomer. Binds 30S ribosomal subunits, but not 50S ribosomal subunits or 70S ribosomes.

Its subcellular location is the cytoplasm. Functionally, one of several proteins that assist in the late maturation steps of the functional core of the 30S ribosomal subunit. Associates with free 30S ribosomal subunits (but not with 30S subunits that are part of 70S ribosomes or polysomes). Required for efficient processing of 16S rRNA. May interact with the 5'-terminal helix region of 16S rRNA. The chain is Ribosome-binding factor A from Leptospira interrogans serogroup Icterohaemorrhagiae serovar Lai (strain 56601).